The sequence spans 570 residues: Proline--tRNA ligase (570 aa).

This sequence belongs to the class-II aminoacyl-tRNA synthetase family. ProS type 1 subfamily. Homodimer.

It localises to the cytoplasm. It catalyses the reaction tRNA(Pro) + L-proline + ATP = L-prolyl-tRNA(Pro) + AMP + diphosphate. Functionally, catalyzes the attachment of proline to tRNA(Pro) in a two-step reaction: proline is first activated by ATP to form Pro-AMP and then transferred to the acceptor end of tRNA(Pro). As ProRS can inadvertently accommodate and process non-cognate amino acids such as alanine and cysteine, to avoid such errors it has two additional distinct editing activities against alanine. One activity is designated as 'pretransfer' editing and involves the tRNA(Pro)-independent hydrolysis of activated Ala-AMP. The other activity is designated 'posttransfer' editing and involves deacylation of mischarged Ala-tRNA(Pro). The misacylated Cys-tRNA(Pro) is not edited by ProRS. This chain is Proline--tRNA ligase, found in Geotalea daltonii (strain DSM 22248 / JCM 15807 / FRC-32) (Geobacter daltonii).